The sequence spans 100 residues: Small ribosomal subunit protein uS14c (100 aa).

The protein belongs to the universal ribosomal protein uS14 family. In terms of assembly, part of the 30S ribosomal subunit.

It localises to the plastid. The protein resides in the chloroplast. Its function is as follows. Binds 16S rRNA, required for the assembly of 30S particles. The chain is Small ribosomal subunit protein uS14c from Chaetosphaeridium globosum (Charophycean green alga).